Consider the following 389-residue polypeptide: Pyruvylated Gal-beta-1,3-epitope synthesis protein 2 (389 aa).

Topologically, residues 1-16 (MTKLWVNFFSQKLLRL) are cytoplasmic. Residues 17-37 (LIPSIIVVFAFAALFAIYSPI) traverse the membrane as a helical segment. Over 38-389 (QLGGINFYKR…WSNSFDLITA (352 aa)) the chain is Lumenal.

It is found in the endoplasmic reticulum membrane. It localises to the golgi apparatus membrane. Functionally, involved in cell wall biogenesis. Has a role in the addition of Gal-beta1,3 moeities to galactomannans and their subsequent pyruvylation. Has a role in meiosis. The chain is Pyruvylated Gal-beta-1,3-epitope synthesis protein 2 (pvg2) from Schizosaccharomyces pombe (strain 972 / ATCC 24843) (Fission yeast).